The following is a 416-amino-acid chain: Serine--tRNA ligase (416 aa).

L-serine is bound at residue 232–234 (TAE). Residue 263 to 265 (RKE) participates in ATP binding. Glu286 contacts L-serine. 350–353 (EISS) provides a ligand contact to ATP. An L-serine-binding site is contributed by Ser384.

The protein belongs to the class-II aminoacyl-tRNA synthetase family. Type-1 seryl-tRNA synthetase subfamily. In terms of assembly, homodimer. The tRNA molecule binds across the dimer.

The protein resides in the cytoplasm. It catalyses the reaction tRNA(Ser) + L-serine + ATP = L-seryl-tRNA(Ser) + AMP + diphosphate + H(+). It carries out the reaction tRNA(Sec) + L-serine + ATP = L-seryl-tRNA(Sec) + AMP + diphosphate + H(+). It participates in aminoacyl-tRNA biosynthesis; selenocysteinyl-tRNA(Sec) biosynthesis; L-seryl-tRNA(Sec) from L-serine and tRNA(Sec): step 1/1. Its function is as follows. Catalyzes the attachment of serine to tRNA(Ser). Is also able to aminoacylate tRNA(Sec) with serine, to form the misacylated tRNA L-seryl-tRNA(Sec), which will be further converted into selenocysteinyl-tRNA(Sec). In Nautilia profundicola (strain ATCC BAA-1463 / DSM 18972 / AmH), this protein is Serine--tRNA ligase.